A 355-amino-acid polypeptide reads, in one-letter code: UPF0324 membrane protein PA5383 (355 aa).

10 helical membrane-spanning segments follow: residues 20-37, 44-66, 71-93, 100-122, 137-159, 166-188, 233-255, 275-297, 307-324, and 331-353; these read IPGL…ILLG, HNGI…TLYP, GSAA…LYGL, IAGV…FGLA, TLLI…EPVV, VAVA…PALF, AVIA…SAWL, WFAV…PALV, LLAM…LSAI, and PLLL…TRLA.

Belongs to the UPF0324 family.

The protein localises to the cell membrane. This is UPF0324 membrane protein PA5383 from Pseudomonas aeruginosa (strain ATCC 15692 / DSM 22644 / CIP 104116 / JCM 14847 / LMG 12228 / 1C / PRS 101 / PAO1).